A 394-amino-acid chain; its full sequence is Putative nickel insertion protein (394 aa).

The protein belongs to the LarC family.

In Syntrophotalea carbinolica (strain DSM 2380 / NBRC 103641 / GraBd1) (Pelobacter carbinolicus), this protein is Putative nickel insertion protein.